We begin with the raw amino-acid sequence, 69 residues long: Large ribosomal subunit protein uL29 (69 aa).

This sequence belongs to the universal ribosomal protein uL29 family.

This chain is Large ribosomal subunit protein uL29, found in Thermoanaerobacter pseudethanolicus (strain ATCC 33223 / 39E) (Clostridium thermohydrosulfuricum).